The primary structure comprises 168 residues: Small ribosomal subunit protein uS5 (168 aa).

The region spanning 17 to 80 is the S5 DRBM domain; sequence IEDQLVAVNR…EDGKKKMINV (64 aa).

Belongs to the universal ribosomal protein uS5 family. In terms of assembly, part of the 30S ribosomal subunit. Contacts proteins S4 and S8.

With S4 and S12 plays an important role in translational accuracy. In terms of biological role, located at the back of the 30S subunit body where it stabilizes the conformation of the head with respect to the body. The chain is Small ribosomal subunit protein uS5 from Lactobacillus acidophilus (strain ATCC 700396 / NCK56 / N2 / NCFM).